The following is a 584-amino-acid chain: Transcriptional regulator STP2 (584 aa).

2 stretches are compositionally biased toward polar residues: residues 1–11 and 180–202; these read MSVAITSNNNK and AESN…SISD. 2 disordered regions span residues 1-22 and 161-214; these read MSVA…PHLK and KMHP…STVS. Residues 203–214 are compositionally biased toward low complexity; the sequence is SPSHSETESTVS. The C2H2-type zinc-finger motif lies at 225–247; sequence FKCPSCDAEFRVRGYLTRHMKKH. Disordered regions lie at residues 381-496 and 553-584; these read RQKK…PQQP and QYQP…SMYF. Over residues 394 to 407 the composition is skewed to low complexity; the sequence is SESSIQSQESESSI. The span at 431-441 shows a compositional bias: basic residues; the sequence is QHQHQHHHHVQ. Low complexity predominate over residues 442–480; it reads NQHQQHVNQQQSIATPASIYSSSASSTSSYESTHSPYTP. Residues 481–496 show a composition bias toward polar residues; that stretch reads QSSRSPLSHMYNPQQP.

In terms of processing, proteolytically cleaved: activated by the amino acid-induced proteolytic removal of an N-terminal inhibitory domain.

Its subcellular location is the cell membrane. The protein localises to the nucleus. Transcription factor involved in the regulation of gene expression in response to extracellular amino acid levels. Synthesized as latent cytoplasmic precursor, which, upon a signal initiated by the plasma membrane SPS amino acid sensor system (including CSY1 and CSH3), becomes proteolytically activated and relocates to the nucleus, where it induces the expression of SPS-sensor-regulated genes. Required for efficient alkalinization through the release of ammonia from the cells produced during the breakdown of amino acids, and subsequent switch to the hyphal form. In Candida albicans (strain SC5314 / ATCC MYA-2876) (Yeast), this protein is Transcriptional regulator STP2 (STP2).